The following is a 215-amino-acid chain: Somatotropin (215 aa).

Residues 1–25 (MAPGARISLLLLITFTLLGPQRSGA) form the signal peptide. His-44 is a binding site for Zn(2+). Cysteines 77 and 188 form a disulfide. Phosphoserine is present on Ser-130. Glu-197 is a Zn(2+) binding site. Cys-205 and Cys-213 form a disulfide bridge.

The protein belongs to the somatotropin/prolactin family.

The protein resides in the secreted. In terms of biological role, plays an important role in growth control. Its major role in stimulating body growth is to stimulate the liver and other tissues to secrete IGF1. It stimulates both the differentiation and proliferation of myoblasts. It also stimulates amino acid uptake and protein synthesis in muscle and other tissues. The sequence is that of Somatotropin (GH1) from Trichosurus vulpecula (Brush-tailed possum).